We begin with the raw amino-acid sequence, 375 residues long: Serpin B5 (375 aa).

Asn99, Asn133, Asn188, Asn298, and Asn361 each carry an N-linked (GlcNAc...) asparagine glycan.

Belongs to the serpin family. Ov-serpin subfamily. In terms of assembly, interacts with IRF6.

It is found in the secreted. The protein resides in the extracellular space. Functionally, tumor suppressor. It blocks the growth, invasion, and metastatic properties of mammary tumors. As it does not undergo the S (stressed) to R (relaxed) conformational transition characteristic of active serpins, it exhibits no serine protease inhibitory activity. The protein is Serpin B5 (Serpinb5) of Rattus norvegicus (Rat).